The chain runs to 287 residues: Polyamine aminopropyltransferase (287 aa).

The PABS domain maps to 5–238 (EIWYETLHAN…GIMTFAWASN (234 aa)). Gln-33 provides a ligand contact to S-methyl-5'-thioadenosine. Spermidine contacts are provided by His-64 and Asp-88. S-methyl-5'-thioadenosine contacts are provided by residues Glu-108 and 140-141 (DG). The Proton acceptor role is filled by Asp-158. Residue 158 to 161 (DCTD) coordinates spermidine. Residue Pro-165 participates in S-methyl-5'-thioadenosine binding.

Belongs to the spermidine/spermine synthase family. Homodimer or homotetramer.

The protein resides in the cytoplasm. It carries out the reaction S-adenosyl 3-(methylsulfanyl)propylamine + putrescine = S-methyl-5'-thioadenosine + spermidine + H(+). Its pathway is amine and polyamine biosynthesis; spermidine biosynthesis; spermidine from putrescine: step 1/1. In terms of biological role, catalyzes the irreversible transfer of a propylamine group from the amino donor S-adenosylmethioninamine (decarboxy-AdoMet) to putrescine (1,4-diaminobutane) to yield spermidine. The polypeptide is Polyamine aminopropyltransferase (Pectobacterium atrosepticum (strain SCRI 1043 / ATCC BAA-672) (Erwinia carotovora subsp. atroseptica)).